Consider the following 364-residue polypeptide: Alanine racemase (364 aa).

The active-site Proton acceptor; specific for D-alanine is lysine 34. Lysine 34 carries the post-translational modification N6-(pyridoxal phosphate)lysine. Substrate is bound at residue arginine 129. The active-site Proton acceptor; specific for L-alanine is tyrosine 259. Substrate is bound at residue methionine 307.

This sequence belongs to the alanine racemase family. It depends on pyridoxal 5'-phosphate as a cofactor.

The catalysed reaction is L-alanine = D-alanine. It participates in amino-acid biosynthesis; D-alanine biosynthesis; D-alanine from L-alanine: step 1/1. Its function is as follows. Catalyzes the interconversion of L-alanine and D-alanine. May also act on other amino acids. The polypeptide is Alanine racemase (alr) (Coxiella burnetii (strain Dugway 5J108-111)).